The following is a 200-amino-acid chain: DNA-directed RNA polymerase subunit 7-like protein (200 aa).

Belongs to the eukaryotic RPB7/RPC8 RNA polymerase subunit family.

Its subcellular location is the nucleus. This chain is DNA-directed RNA polymerase subunit 7-like protein (NRPB7L), found in Arabidopsis thaliana (Mouse-ear cress).